The chain runs to 810 residues: Venom phosphodiesterase 2 (810 aa).

Residues 1–23 (MIQQKVLFISLVAVTLGLGLGLG) form the signal peptide. The region spanning 33-77 (QSWSCSKLRCGEKRIANVLCSCSDDCLEKKDCCTDYKSICKGETS) is the SMB domain. Cystine bridges form between Cys37–Cys42, Cys37–Cys54, Cys42–Cys72, Cys52–Cys54, Cys52–Cys65, Cys58–Cys64, Cys65–Cys72, Cys83–Cys129, and Cys91–Cys303. The a divalent metal cation site is built by Asp106 and Thr144. The AMP-threonine intermediate role is filled by Thr144. N-linked (GlcNAc...) asparagine glycosylation is found at Asn175, Asn218, and Asn229. Position 230 (Lys230) interacts with AMP. The a divalent metal cation site is built by Asp264, His268, Asp311, and His312. His268 is a binding site for AMP. Cystine bridges form between Cys319/Cys416, Cys367/Cys752, Cys500/Cys558, Cys513/Cys613, Cys515/Cys598, and Cys721/Cys731. The N-linked (GlcNAc...) asparagine glycan is linked to Asn364. His421 is a binding site for a divalent metal cation. 4 N-linked (GlcNAc...) asparagine glycosylation sites follow: Asn471, Asn553, Asn633, and Asn704.

This sequence belongs to the nucleotide pyrophosphatase/phosphodiesterase family. As to quaternary structure, monomer cleaved in two subunits; disulfide-linked. Is synthesized as a single-chain protein and is subsequently cleaved to form a two-subunit protein held together with disulfide bonds. Requires a divalent metal cation as cofactor. Expressed by venom gland.

The protein resides in the secreted. The catalysed reaction is ADP + H2O = AMP + phosphate + H(+). In terms of biological role, hydrolyzes ADP with high activity. Shows weak or no activity on 5'-AMP, 5'-GMP, 3'-AMP, ATP, cAMP, and cGMP. Is devoid of monophosphatase and proteinase activities. Dose-dependently inhibits platelet aggregation induced by ADP (IC(50)=0.99 uM) and collagen (IC(50)=1.4 uM). The sequence is that of Venom phosphodiesterase 2 from Crotalus adamanteus (Eastern diamondback rattlesnake).